Consider the following 208-residue polypeptide: Holliday junction resolvase RecU (208 aa).

The segment at 1 to 28 is disordered; it reads MNYPNGKPYSKNKPLDGRKSSPFSSNIE. Residues Thr-87, Asp-89, Glu-102, and Gln-121 each contribute to the Mg(2+) site.

Belongs to the RecU family. It depends on Mg(2+) as a cofactor.

Its subcellular location is the cytoplasm. It carries out the reaction Endonucleolytic cleavage at a junction such as a reciprocal single-stranded crossover between two homologous DNA duplexes (Holliday junction).. Functionally, endonuclease that resolves Holliday junction intermediates in genetic recombination. Cleaves mobile four-strand junctions by introducing symmetrical nicks in paired strands. Promotes annealing of linear ssDNA with homologous dsDNA. Required for DNA repair, homologous recombination and chromosome segregation. This Staphylococcus epidermidis (strain ATCC 12228 / FDA PCI 1200) protein is Holliday junction resolvase RecU.